A 62-amino-acid polypeptide reads, in one-letter code: Ferredoxin-2 (62 aa).

4Fe-4S ferredoxin-type domains follow at residues 2 to 28 (AHRI…SAGD) and 29 to 62 (SIYV…IIKV). Cysteine 9, cysteine 12, cysteine 15, cysteine 19, cysteine 38, cysteine 41, cysteine 50, and cysteine 54 together coordinate [4Fe-4S] cluster.

The cofactor is [4Fe-4S] cluster.

Ferredoxins are iron-sulfur proteins that transfer electrons in a wide variety of metabolic reactions. This chain is Ferredoxin-2, found in Chlorobaculum tepidum (strain ATCC 49652 / DSM 12025 / NBRC 103806 / TLS) (Chlorobium tepidum).